The sequence spans 218 residues: Small ribosomal subunit protein uS3c (218 aa).

The KH type-2 domain occupies 43 to 118 (IKDYVKKNKK…RLNIAITRIE (76 aa)).

The protein belongs to the universal ribosomal protein uS3 family. As to quaternary structure, part of the 30S ribosomal subunit.

Its subcellular location is the plastid. The protein localises to the chloroplast. The sequence is that of Small ribosomal subunit protein uS3c (rps3) from Phalaenopsis aphrodite subsp. formosana (Moth orchid).